Consider the following 144-residue polypeptide: MSTAYEEYMRQLVLPMRQELVQAGFKELTTAEEVETFMEDAEGTTFVVVNSVCGCAAGLARPAAVQAVSGSEKGPDETVTVFAGQDREATAKMREYFEGYEPSSPSMALLKGKEVVHFIPREQIEGREMTEIMKNITDAFEKHC.

It belongs to the bacilliredoxin family.

The protein is Bacilliredoxin BLi02323/BL05224 of Bacillus licheniformis (strain ATCC 14580 / DSM 13 / JCM 2505 / CCUG 7422 / NBRC 12200 / NCIMB 9375 / NCTC 10341 / NRRL NRS-1264 / Gibson 46).